The following is a 127-amino-acid chain: Nitrogenase-stabilizing/protective protein NifW (127 aa).

It belongs to the NifW family. In terms of assembly, homotrimer; associates with NifD.

Its function is as follows. May protect the nitrogenase Fe-Mo protein from oxidative damage. The chain is Nitrogenase-stabilizing/protective protein NifW from Rhizobium etli (strain ATCC 51251 / DSM 11541 / JCM 21823 / NBRC 15573 / CFN 42).